Reading from the N-terminus, the 138-residue chain is Transposon Tn10 TetD protein (138 aa).

One can recognise an HTH araC/xylS-type domain in the interval lysine 31 to asparagine 129. DNA-binding regions (H-T-H motif) lie at residues aspartate 48 to threonine 69 and isoleucine 96 to phenylalanine 119.

The sequence is that of Transposon Tn10 TetD protein (tetD) from Escherichia coli.